The sequence spans 416 residues: Histidinol dehydrogenase (416 aa).

Residues tyrosine 117, glutamine 178, and asparagine 201 each contribute to the NAD(+) site. Substrate contacts are provided by threonine 224, glutamine 246, and histidine 249. Residues glutamine 246 and histidine 249 each coordinate Zn(2+). Catalysis depends on proton acceptor residues glutamate 314 and histidine 315. Substrate contacts are provided by histidine 315, aspartate 348, glutamate 402, and histidine 407. Position 348 (aspartate 348) interacts with Zn(2+). Residue histidine 407 participates in Zn(2+) binding.

The protein belongs to the histidinol dehydrogenase family. Requires Zn(2+) as cofactor.

It carries out the reaction L-histidinol + 2 NAD(+) + H2O = L-histidine + 2 NADH + 3 H(+). It functions in the pathway amino-acid biosynthesis; L-histidine biosynthesis; L-histidine from 5-phospho-alpha-D-ribose 1-diphosphate: step 9/9. Catalyzes the sequential NAD-dependent oxidations of L-histidinol to L-histidinaldehyde and then to L-histidine. This Staphylococcus aureus (strain Mu50 / ATCC 700699) protein is Histidinol dehydrogenase.